The sequence spans 438 residues: 3-phosphoshikimate 1-carboxyvinyltransferase 1 (438 aa).

3-phosphoshikimate-binding residues include lysine 30, serine 31, and arginine 35. Lysine 30 contacts phosphoenolpyruvate. Glycine 104 and arginine 132 together coordinate phosphoenolpyruvate. Positions 178, 179, 180, 207, 326, and 353 each coordinate 3-phosphoshikimate. Glutamine 180 provides a ligand contact to phosphoenolpyruvate. Glutamate 326 functions as the Proton acceptor in the catalytic mechanism. 3 residues coordinate phosphoenolpyruvate: arginine 357, arginine 398, and lysine 423.

The protein belongs to the EPSP synthase family. In terms of assembly, monomer.

The protein resides in the cytoplasm. The enzyme catalyses 3-phosphoshikimate + phosphoenolpyruvate = 5-O-(1-carboxyvinyl)-3-phosphoshikimate + phosphate. Its pathway is metabolic intermediate biosynthesis; chorismate biosynthesis; chorismate from D-erythrose 4-phosphate and phosphoenolpyruvate: step 6/7. In terms of biological role, catalyzes the transfer of the enolpyruvyl moiety of phosphoenolpyruvate (PEP) to the 5-hydroxyl of shikimate-3-phosphate (S3P) to produce enolpyruvyl shikimate-3-phosphate and inorganic phosphate. The sequence is that of 3-phosphoshikimate 1-carboxyvinyltransferase 1 from Streptomyces coelicolor (strain ATCC BAA-471 / A3(2) / M145).